Here is a 538-residue protein sequence, read N- to C-terminus: T-complex protein 1 subunit epsilon (538 aa).

The protein belongs to the TCP-1 chaperonin family. As to quaternary structure, heterooligomeric complex of about 850 to 900 kDa that forms two stacked rings, 12 to 16 nm in diameter.

It localises to the cytoplasm. Its function is as follows. Molecular chaperone; assists the folding of proteins upon ATP hydrolysis. Known to play a role, in vitro, in the folding of actin and tubulin. The sequence is that of T-complex protein 1 subunit epsilon (cct5) from Dictyostelium discoideum (Social amoeba).